The primary structure comprises 88 residues: Serine protease inhibitor Kazal-type 11 (88 aa).

The N-terminal stretch at 1-24 (MSSTWIKFLFILTLVLLPYFVAES) is a signal peptide. A Kazal-like domain is found at 32-87 (LRKVPNCTLYKSESDCSRTLIPVCADNQMTYYNACYFCLEQLVSPIKYKYHGICTK). A glycan (N-linked (GlcNAc...) asparagine) is linked at Asn37. 3 disulfide bridges follow: Cys38–Cys69, Cys47–Cys66, and Cys55–Cys85.

Expressed in epydiymis, in the caput. Also expressed in seminal vesicles.

The protein resides in the secreted. Its function is as follows. Probable serine protease inhibitor. This chain is Serine protease inhibitor Kazal-type 11 (Spink11), found in Mus musculus (Mouse).